The chain runs to 264 residues: S-adenosylmethionine decarboxylase proenzyme (264 aa).

The active-site Schiff-base intermediate with substrate; via pyruvic acid is Ser112. Ser112 carries the pyruvic acid (Ser); by autocatalysis modification. His117 (proton acceptor; for processing activity) is an active-site residue. The active-site Proton donor; for catalytic activity is Cys140.

Belongs to the prokaryotic AdoMetDC family. Type 2 subfamily. As to quaternary structure, heterooctamer of four alpha and four beta chains arranged as a tetramer of alpha/beta heterodimers. Pyruvate serves as cofactor. Is synthesized initially as an inactive proenzyme. Formation of the active enzyme involves a self-maturation process in which the active site pyruvoyl group is generated from an internal serine residue via an autocatalytic post-translational modification. Two non-identical subunits are generated from the proenzyme in this reaction, and the pyruvate is formed at the N-terminus of the alpha chain, which is derived from the carboxyl end of the proenzyme. The post-translation cleavage follows an unusual pathway, termed non-hydrolytic serinolysis, in which the side chain hydroxyl group of the serine supplies its oxygen atom to form the C-terminus of the beta chain, while the remainder of the serine residue undergoes an oxidative deamination to produce ammonia and the pyruvoyl group blocking the N-terminus of the alpha chain.

The catalysed reaction is S-adenosyl-L-methionine + H(+) = S-adenosyl 3-(methylsulfanyl)propylamine + CO2. It participates in amine and polyamine biosynthesis; S-adenosylmethioninamine biosynthesis; S-adenosylmethioninamine from S-adenosyl-L-methionine: step 1/1. Functionally, catalyzes the decarboxylation of S-adenosylmethionine to S-adenosylmethioninamine (dcAdoMet), the propylamine donor required for the synthesis of the polyamines spermine and spermidine from the diamine putrescine. The sequence is that of S-adenosylmethionine decarboxylase proenzyme from Escherichia coli O127:H6 (strain E2348/69 / EPEC).